A 79-amino-acid polypeptide reads, in one-letter code: MSALKDIVELTAKELVDNKDKVRVTEIEGEKTVVIELRVDPAELGKVIGKQGRIARALRTILTAIGRKIGKRVVLEILE.

The 48-residue stretch at 32 to 79 (TVVIELRVDPAELGKVIGKQGRIARALRTILTAIGRKIGKRVVLEILE) folds into the KH domain.

Belongs to the KhpA RNA-binding protein family.

The protein resides in the cytoplasm. In terms of biological role, a probable RNA-binding protein. This Aquifex aeolicus (strain VF5) protein is RNA-binding protein KhpA.